We begin with the raw amino-acid sequence, 731 residues long: Radial spoke head 10 homolog B (731 aa).

The tract at residues 1-69 is disordered; sequence MARGDNMKSS…PNENQPIGEH (69 aa). Polar residues predominate over residues 7–17; it reads MKSSNKSTPEP. Composition is skewed to low complexity over residues 18-36 and 46-57; these read TLSKTLVESSTSSLLSESV and SSSAVCSASTVS. 10 MORN repeats span residues 86–108, 109–131, 132–154, 155–177, 179–201, 204–226, 227–249, 251–273, 284–306, and 307–329; these read YEGEKCGEMFHGEGVAYFQGGHV, YKGSFSHGLMHGYGEYIWSDGLK, YQGDFKVNVPMGHGTYTWLNGST, YEGEVHQGIRHGVGMYKCVKTLT, YRGQWYLGKRQGQGEMFYNQEAT, YKGEWVNNCREGWGKRCYPSGNV, YEGQWRNNVRHGEGTMRWIDLDQ, YSGQWINGIQEGKGTHTWFRKRA, YTGDFVQAMRHGQGQFLYASGAL, and YCGQWKYDKKHGQGRYIFENGRV. Disordered stretches follow at residues 353 to 377 and 709 to 731; these read TTPFPDENDSSKGASQSSSNASPLG and KQEQDADGNELCPVTTTSVTSIH. Residues 363 to 377 are compositionally biased toward low complexity; sequence SKGASQSSSNASPLG. The span at 722 to 731 shows a compositional bias: polar residues; sequence VTTTSVTSIH.

Its subcellular location is the cytoplasm. The protein resides in the cytoskeleton. It localises to the cilium axoneme. The protein localises to the cell projection. It is found in the cilium. Its subcellular location is the flagellum. May function as part of axonemal radial spoke complexes. Radial spoke complexes are important for ciliary motility. This Danio rerio (Zebrafish) protein is Radial spoke head 10 homolog B (rsph10b).